The chain runs to 996 residues: Filament-like plant protein 5 (996 aa).

A disordered region spans residues 1 to 20 (MEGRGWPWKRKSSDKATTEK). 4 coiled-coil regions span residues 59-94 (THMS…TKES), 133-248 (TAED…KYDL), 280-301 (VKKI…RKKL), and 359-387 (LTRR…LQVS). Disordered regions lie at residues 409–482 (NNDK…SSSR) and 496–534 (VGSD…DEDT). Over residues 417 to 428 (SNSRNLSESLSS) the composition is skewed to low complexity. Residues 471 to 482 (VNGSSKPRSSSR) show a composition bias toward polar residues. The span at 503-527 (ANSASKSSNSVCSRRSVEKQSSSKS) shows a compositional bias: low complexity. 3 coiled-coil regions span residues 601 to 622 (QNSE…VANI), 737 to 841 (DSSC…FTTE), and 876 to 906 (NQEK…QSLQ). Residues 962 to 996 (IMKSSSVSSSSKEDNEKHTRGLGRFFSSKSKNSAR) form a disordered region.

Belongs to the FPP family. In terms of assembly, interacts with WPP/MAF proteins.

The protein is Filament-like plant protein 5 (FPP5) of Arabidopsis thaliana (Mouse-ear cress).